Consider the following 482-residue polypeptide: Tektin (482 aa).

Coiled coils occupy residues 100–129, 171–204, 282–324, 376–407, and 441–478; these read CLAE…QAKI, ARAV…ALRV, RLNE…ALTS, VKVA…DALR, and RTQT…TMGG. Positions 311–330 are disordered; it reads EQARAKGQRSALTSALDDKR. An Asymmetric dimethylarginine modification is found at Arg-462.

The protein belongs to the tektin family. In terms of processing, asymmetrically dimethylated at Arg-462 during flagellum resorption. Probably methylated by PRMT1.

The protein resides in the cytoplasm. The protein localises to the cytoskeleton. It localises to the flagellum axoneme. Its subcellular location is the flagellum basal body. Functionally, structural component of ciliary and flagellar microtubules. Plays a key role in the assembly or attachment of the inner dynein arm to microtubules in flagella and cilia. Forms filamentous polymers in the walls of ciliary and flagellar microtubules. The polypeptide is Tektin (Chlamydomonas reinhardtii (Chlamydomonas smithii)).